Reading from the N-terminus, the 642-residue chain is Epithelial sodium channel subunit alpha (642 aa).

Residues 1–81 (MHQVVTVKAE…VCSKRNKMKT (81 aa)) are Cytoplasmic-facing. A helical transmembrane segment spans residues 82–102 (AFWSVLFFLTFGLMYWQFGIL). Residues 103 to 553 (YREYFSFPVN…NQWSLWFGSS (451 aa)) are Extracellular-facing. 10 cysteine pairs are disulfide-bonded: Cys-130–Cys-297, Cys-222–Cys-229, Cys-274–Cys-281, Cys-385–Cys-470, Cys-407–Cys-447, Cys-407–Cys-466, Cys-411–Cys-462, Cys-420–Cys-447, Cys-420–Cys-470, and Cys-422–Cys-436. The interval 170-209 (GAAQSSQKRSQRSLSHHVQRHPLRRRKRNEPVSLKGNSPP) is disordered. Residues 178–197 (RSQRSLSHHVQRHPLRRRKR) show a composition bias toward basic residues. Residues 554–574 (VLSVVELAELILDFIAITIIL) form a helical membrane-spanning segment. Over 575–642 (SFKRFRSRQV…RDGEAVIGLE (68 aa)) the chain is Cytoplasmic. The segment at 587 to 608 (PSVPPPGAHDNTAFQSEPADPS) is disordered.

The protein belongs to the amiloride-sensitive sodium channel (TC 1.A.6) family. SCNN1A subfamily. In terms of assembly, heterotrimer; disulfide-linked and containing an alpha/SCNN1A, a beta/SCNN1B and a gamma/SCNN1G subunit.

It localises to the apical cell membrane. The protein resides in the cell projection. It is found in the cilium. Its subcellular location is the cytoplasmic granule. The protein localises to the cytoplasm. It localises to the cytoplasmic vesicle. The protein resides in the secretory vesicle. It is found in the acrosome. Its subcellular location is the flagellum. It catalyses the reaction Na(+)(in) = Na(+)(out). Its activity is regulated as follows. Originally identified and characterized by its inhibition by the diuretic drug amiloride. In terms of biological role, this is one of the three pore-forming subunits of the heterotrimeric epithelial sodium channel (ENaC), a critical regulator of sodium balance and fluid homeostasis. ENaC operates in epithelial tissues, where it mediates the electrodiffusion of sodium ions from extracellular fluid through the apical membrane of cells, with water following osmotically. The chain is Epithelial sodium channel subunit alpha from Pelodiscus sinensis (Chinese softshell turtle).